Consider the following 1062-residue polypeptide: Suppressor of mar1-1 protein (1062 aa).

The segment covering 1–17 (MSENTTAPSDNITNEQR) has biased composition (polar residues). Disordered stretches follow at residues 1–27 (MSEN…DDVD), 188–217 (ENSS…ASTS), 267–337 (TKQE…KKRT), 370–398 (SSKF…SATQ), 595–634 (EIST…QQEG), and 681–804 (SGEE…GNLG). Ser2 is modified (N-acetylserine). Over residues 189–205 (NSSNNTSSQHNTSSSRR) the composition is skewed to low complexity. Polar residues-rich tracts occupy residues 267-279 (TKQE…APSS), 287-298 (SLTSVPQRTNNE), and 305-323 (STAN…NNLI). A compositionally biased stretch (basic residues) spans 325–335 (IKRKRGRPPKK). 2 stretches are compositionally biased toward polar residues: residues 370-385 (SSKF…NPVS) and 610-629 (TKGS…GISD). Residues Ser378, Ser379, Ser628, and Ser681 each carry the phosphoserine modification. Residues 685-699 (AITKENAEYERKTPG) are compositionally biased toward basic and acidic residues. At Thr697 the chain carries Phosphothreonine. Polar residues predominate over residues 704–716 (TTFVPLENSQPSD). Phosphoserine; by ATM or ATR is present on Ser712. Ser738 bears the Phosphoserine mark. Residues 781–793 (KGTSSIHNDTESA) show a composition bias toward polar residues. Phosphothreonine is present on Thr817.

In terms of assembly, interacts with RFM1. This interaction is required to recruit HST1.

Its subcellular location is the nucleus. DNA-binding protein that specifically binds the regulatory region of middle sporulation genes (MSE). Required for the repression of middle sporulation genes during vegetative growth. Represses expression via the recruitment of histone deacetylase HST1. This Saccharomyces cerevisiae (strain ATCC 204508 / S288c) (Baker's yeast) protein is Suppressor of mar1-1 protein (SUM1).